Reading from the N-terminus, the 269-residue chain is Shikimate dehydrogenase (NADP(+)) (269 aa).

Shikimate is bound by residues 14–16 (SVS) and Thr61. Catalysis depends on Lys65, which acts as the Proton acceptor. Shikimate contacts are provided by Asn85 and Asp98. Residues 120–124 (GAGGA), 143–148 (NRTEEK), and Thr211 contribute to the NADP(+) site. Tyr213 is a shikimate binding site. Residue Gly234 coordinates NADP(+).

Belongs to the shikimate dehydrogenase family. As to quaternary structure, homodimer.

The enzyme catalyses shikimate + NADP(+) = 3-dehydroshikimate + NADPH + H(+). The protein operates within metabolic intermediate biosynthesis; chorismate biosynthesis; chorismate from D-erythrose 4-phosphate and phosphoenolpyruvate: step 4/7. In terms of biological role, involved in the biosynthesis of the chorismate, which leads to the biosynthesis of aromatic amino acids. Catalyzes the reversible NADPH linked reduction of 3-dehydroshikimate (DHSA) to yield shikimate (SA). This chain is Shikimate dehydrogenase (NADP(+)), found in Archaeoglobus fulgidus (strain ATCC 49558 / DSM 4304 / JCM 9628 / NBRC 100126 / VC-16).